Consider the following 227-residue polypeptide: Cytochrome c oxidase subunit 2 (227 aa).

Residues 1–14 (MAYPMQLGFQDATS) lie on the Mitochondrial intermembrane side of the membrane. Residues 15–45 (PIMEELLHFHDHTLMIVFLISSLVLYIISLM) traverse the membrane as a helical segment. At 46–59 (LTTKLTHTSTMDAQ) the chain is on the mitochondrial matrix side. Residues 60 to 87 (EVETIWTILPAIILILIALPSLRILYMM) form a helical membrane-spanning segment. Residues 88–227 (DEINNPSLTV…YFEKWSASML (140 aa)) lie on the Mitochondrial intermembrane side of the membrane. The Cu cation site is built by histidine 161, cysteine 196, glutamate 198, cysteine 200, histidine 204, and methionine 207. Mg(2+) is bound at residue glutamate 198. Residue tyrosine 218 is modified to Phosphotyrosine.

This sequence belongs to the cytochrome c oxidase subunit 2 family. In terms of assembly, component of the cytochrome c oxidase (complex IV, CIV), a multisubunit enzyme composed of 14 subunits. The complex is composed of a catalytic core of 3 subunits MT-CO1, MT-CO2 and MT-CO3, encoded in the mitochondrial DNA, and 11 supernumerary subunits COX4I, COX5A, COX5B, COX6A, COX6B, COX6C, COX7A, COX7B, COX7C, COX8 and NDUFA4, which are encoded in the nuclear genome. The complex exists as a monomer or a dimer and forms supercomplexes (SCs) in the inner mitochondrial membrane with NADH-ubiquinone oxidoreductase (complex I, CI) and ubiquinol-cytochrome c oxidoreductase (cytochrome b-c1 complex, complex III, CIII), resulting in different assemblies (supercomplex SCI(1)III(2)IV(1) and megacomplex MCI(2)III(2)IV(2)). Found in a complex with TMEM177, COA6, COX18, COX20, SCO1 and SCO2. Interacts with TMEM177 in a COX20-dependent manner. Interacts with COX20. Interacts with COX16. Requires Cu cation as cofactor.

Its subcellular location is the mitochondrion inner membrane. It catalyses the reaction 4 Fe(II)-[cytochrome c] + O2 + 8 H(+)(in) = 4 Fe(III)-[cytochrome c] + 2 H2O + 4 H(+)(out). Functionally, component of the cytochrome c oxidase, the last enzyme in the mitochondrial electron transport chain which drives oxidative phosphorylation. The respiratory chain contains 3 multisubunit complexes succinate dehydrogenase (complex II, CII), ubiquinol-cytochrome c oxidoreductase (cytochrome b-c1 complex, complex III, CIII) and cytochrome c oxidase (complex IV, CIV), that cooperate to transfer electrons derived from NADH and succinate to molecular oxygen, creating an electrochemical gradient over the inner membrane that drives transmembrane transport and the ATP synthase. Cytochrome c oxidase is the component of the respiratory chain that catalyzes the reduction of oxygen to water. Electrons originating from reduced cytochrome c in the intermembrane space (IMS) are transferred via the dinuclear copper A center (CU(A)) of subunit 2 and heme A of subunit 1 to the active site in subunit 1, a binuclear center (BNC) formed by heme A3 and copper B (CU(B)). The BNC reduces molecular oxygen to 2 water molecules using 4 electrons from cytochrome c in the IMS and 4 protons from the mitochondrial matrix. In Bison bonasus (European bison), this protein is Cytochrome c oxidase subunit 2 (MT-CO2).